The chain runs to 339 residues: Tetraacyldisaccharide 4'-kinase (339 aa).

Residue Thr-61–Thr-68 participates in ATP binding.

This sequence belongs to the LpxK family.

The enzyme catalyses a lipid A disaccharide + ATP = a lipid IVA + ADP + H(+). The protein operates within glycolipid biosynthesis; lipid IV(A) biosynthesis; lipid IV(A) from (3R)-3-hydroxytetradecanoyl-[acyl-carrier-protein] and UDP-N-acetyl-alpha-D-glucosamine: step 6/6. Functionally, transfers the gamma-phosphate of ATP to the 4'-position of a tetraacyldisaccharide 1-phosphate intermediate (termed DS-1-P) to form tetraacyldisaccharide 1,4'-bis-phosphate (lipid IVA). In Stenotrophomonas maltophilia (strain R551-3), this protein is Tetraacyldisaccharide 4'-kinase.